A 710-amino-acid polypeptide reads, in one-letter code: MWLSLPRSGYGSVATLTSKRVLACLTPLRQFSTSPAVSNANHKNVDNINKSPANDAANNAVEKGDKPTTSPEKLATKAEKSSANSVKAAANALGESNLSNSEQRRLDWIIMKDMLKYIWPKGKTSVKFRVLVAVALLVGAKLLNVQVPFFFKEIIDDMNIEWNSATALGVGITALIFSYGAARFGAVLFGELRNAIFASVAQKAIKEVATNVFRHLLKLDMAFHLSRQTGGITRAIDRGTKGISFVLSSMVFHIIPIALEISLVCGILSYNFGWKYALVTGATMVSYAIFTITTTSWRTKFRRNANRADNEASNVCLDSLINIEAVKSFGNEGYMVDKYQSALTKYEKASIKIATSLAFLNSGQNLIFSSALTAMMYMTCCGVADGSLTVGDLVLVNQLVFQLSVPLNFLGSVYRDLRQSLLDMGSLFSLQKVAGQIQESPNAKPLQLTNGEIRFENVTYGYHPDRPILKNASFVIPGGLKTAIVGPSGSGKSTILKLAFRFYDTQEGRILIDGQDVREVTLASLRSAIGVVPQDTPLFNDSIMNNIRFGRLEADDKEVENAACAAKLDALVRQLPDGWNTNVGERGMMISGGEKQRLAVARVLLKNSPVVFLDEATSALDTNTERQLLANMDQVLGDKTCVAIAHRLRTVADSDKIICLNQGGVEEEGTQAELLLKDGLYKSMWDAQEQVELGEEGIKEAEEKAAKKDV.

Residues 1 to 38 constitute a mitochondrion transit peptide; sequence MWLSLPRSGYGSVATLTSKRVLACLTPLRQFSTSPAVS. Residues 35–52 are compositionally biased toward polar residues; sequence PAVSNANHKNVDNINKSP. The tract at residues 35 to 83 is disordered; it reads PAVSNANHKNVDNINKSPANDAANNAVEKGDKPTTSPEKLATKAEKSSA. Topologically, residues 39-129 are mitochondrial matrix; the sequence is NANHKNVDNI…PKGKTSVKFR (91 aa). A helical membrane pass occupies residues 130 to 151; it reads VLVAVALLVGAKLLNVQVPFFF. An ABC transmembrane type-1 domain is found at 130 to 419; that stretch reads VLVAVALLVG…LGSVYRDLRQ (290 aa). Residues 152-173 lie on the Mitochondrial intermembrane side of the membrane; it reads KEIIDDMNIEWNSATALGVGIT. The chain crosses the membrane as a helical span at residues 174-197; it reads ALIFSYGAARFGAVLFGELRNAIF. Residues 198–246 are Mitochondrial matrix-facing; the sequence is ASVAQKAIKEVATNVFRHLLKLDMAFHLSRQTGGITRAIDRGTKGISFV. Residues 247-270 form a helical membrane-spanning segment; it reads LSSMVFHIIPIALEISLVCGILSY. Asn-271 is a topological domain (mitochondrial intermembrane). The chain crosses the membrane as a helical span at residues 272 to 292; sequence FGWKYALVTGATMVSYAIFTI. Residues 293 to 358 lie on the Mitochondrial matrix side of the membrane; it reads TTTSWRTKFR…ASIKIATSLA (66 aa). Residues 298 to 302 and 361 to 364 each bind glutathione; these read RTKFR and NSGQ. A helical membrane pass occupies residues 359–377; that stretch reads FLNSGQNLIFSSALTAMMY. Residues 378 to 392 lie on the Mitochondrial intermembrane side of the membrane; that stretch reads MTCCGVADGSLTVGD. A helical transmembrane segment spans residues 393–414; the sequence is LVLVNQLVFQLSVPLNFLGSVY. Gly-411 is a glutathione binding site. The Mitochondrial matrix portion of the chain corresponds to 415 to 710; that stretch reads RDLRQSLLDM…AEEKAAKKDV (296 aa). The region spanning 453–687 is the ABC transporter domain; sequence IRFENVTYGY…DGLYKSMWDA (235 aa). ATP-binding positions include Tyr-462 and 486–497; that span reads GPSGSGKSTILK.

Belongs to the ABC transporter superfamily. ABCB family. Heavy Metal importer (TC 3.A.1.210) subfamily. Homodimer.

It localises to the mitochondrion inner membrane. Performs an essential function in the generation of cytoplasmic iron-sulfur proteins by mediating the ATP-dependent export of Fe/S cluster precursors synthesized by NFS1 and other mitochondrial proteins. Hydrolyzes ATP. Binds glutathione and may function by transporting a glutathione-conjugated iron-sulfur compound. This is Iron-sulfur clusters transporter ATM1, mitochondrial from Yarrowia lipolytica (strain CLIB 122 / E 150) (Yeast).